The primary structure comprises 142 residues: Large ribosomal subunit protein uL13 (142 aa).

The protein belongs to the universal ribosomal protein uL13 family. Part of the 50S ribosomal subunit.

Its function is as follows. This protein is one of the early assembly proteins of the 50S ribosomal subunit, although it is not seen to bind rRNA by itself. It is important during the early stages of 50S assembly. The polypeptide is Large ribosomal subunit protein uL13 (Pyrococcus furiosus (strain ATCC 43587 / DSM 3638 / JCM 8422 / Vc1)).